An 86-amino-acid polypeptide reads, in one-letter code: DNA-directed RNA polymerase subunit omega (86 aa).

This sequence belongs to the RNA polymerase subunit omega family. The RNAP catalytic core consists of 2 alpha, 1 beta, 1 beta' and 1 omega subunit. When a sigma factor is associated with the core the holoenzyme is formed, which can initiate transcription.

The enzyme catalyses RNA(n) + a ribonucleoside 5'-triphosphate = RNA(n+1) + diphosphate. In terms of biological role, promotes RNA polymerase assembly. Latches the N- and C-terminal regions of the beta' subunit thereby facilitating its interaction with the beta and alpha subunits. This Psychrobacter sp. (strain PRwf-1) protein is DNA-directed RNA polymerase subunit omega.